A 480-amino-acid chain; its full sequence is 6-phosphogluconate dehydrogenase, decarboxylating 1 (480 aa).

Residues 10–15, 33–35, 77–79, and N105 contribute to the NADP(+) site; these read GLAVMG, NRT, and VKA. Residues N105 and 131–133 contribute to the substrate site; that span reads SGG. The active-site Proton acceptor is the K186. Residue 189-190 coordinates substrate; sequence HN. The active-site Proton donor is the E193. The substrate site is built by Y194, K264, R291, R450, and H456.

This sequence belongs to the 6-phosphogluconate dehydrogenase family. Homodimer. Highly expressed in inflorescence, lowly expressed in root and embryos and almost absent in leaves.

It localises to the cytoplasm. The enzyme catalyses 6-phospho-D-gluconate + NADP(+) = D-ribulose 5-phosphate + CO2 + NADPH. It functions in the pathway carbohydrate degradation; pentose phosphate pathway; D-ribulose 5-phosphate from D-glucose 6-phosphate (oxidative stage): step 3/3. Its function is as follows. Catalyzes the oxidative decarboxylation of 6-phosphogluconate to ribulose 5-phosphate and CO(2), with concomitant reduction of NADP to NADPH. The chain is 6-phosphogluconate dehydrogenase, decarboxylating 1 (G6PGH1) from Oryza sativa subsp. japonica (Rice).